The chain runs to 207 residues: Ribosomal RNA small subunit methyltransferase G (207 aa).

Residues G73, L78, 124–125 (VE), and R139 each bind S-adenosyl-L-methionine.

This sequence belongs to the methyltransferase superfamily. RNA methyltransferase RsmG family.

The protein resides in the cytoplasm. The catalysed reaction is guanosine(527) in 16S rRNA + S-adenosyl-L-methionine = N(7)-methylguanosine(527) in 16S rRNA + S-adenosyl-L-homocysteine. In terms of biological role, specifically methylates the N7 position of guanine in position 527 of 16S rRNA. The protein is Ribosomal RNA small subunit methyltransferase G of Salmonella arizonae (strain ATCC BAA-731 / CDC346-86 / RSK2980).